The following is a 2410-amino-acid chain: Dual specificity protein kinase splA (2410 aa).

6 disordered regions span residues 29-48 (NNNN…NNNN), 66-103 (NHPS…GELT), 116-158 (NTQT…SNGG), 187-252 (NISP…SSGI), 508-647 (QQLQ…VPSA), and 659-820 (SSSS…KKEG). 2 stretches are compositionally biased toward low complexity: residues 116-128 (NTQT…TSPN) and 137-158 (NTTT…SNGG). A compositionally biased stretch (pro residues) spans 514-525 (QPPPTIQPPPQQ). Low complexity predominate over residues 530–544 (LRGNRSSGNLSGLNS). Polar residues predominate over residues 545–554 (FSLKQSTDSL). Residues 560–583 (SQQSTVSSNSTPIAATPISPLTAP) show a composition bias toward low complexity. The span at 584 to 594 (TSPPPPPPPPT) shows a compositional bias: pro residues. Low complexity-rich tracts occupy residues 595-618 (NFNS…NTTV), 627-639 (VLPK…SPRP), 659-686 (SSSS…LNIS), 701-738 (SPSY…SPSV), 746-759 (ISPN…PNIS), and 777-813 (NTNN…NNTN). 2 consecutive B30.2/SPRY domains span residues 822 to 1004 (SSWF…GPFS) and 1020 to 1209 (DSGG…PPFK). Disordered regions lie at residues 1228–1428 (PNGN…NNIY) and 1493–1512 (SLGV…PRKI). Composition is skewed to low complexity over residues 1229–1359 (NGNN…NNNI), 1373–1399 (SSTG…NNSS), 1419–1428 (SSTNNNNNIY), and 1493–1507 (SLGV…SPKT). Residues 1481–1703 (PITASTNHTL…CVATFPGGHF (223 aa)) enclose the B30.2/SPRY 3 domain. The 65-residue stretch at 1734–1798 (WAPNDVAIWL…INRLNRMIQI (65 aa)) folds into the SAM domain. Residues 1862–2105 (KSYTQKEIED…PPPPPQLPVR (244 aa)) form a disordered region. Residues 1865 to 1874 (TQKEIEDRNR) show a composition bias toward basic and acidic residues. A compositionally biased stretch (low complexity) spans 1951–1967 (SVSSTGGSSGFLTFPSS). Positions 1989 to 2002 (ITSNYKGITNTGQP) are enriched in polar residues. Over residues 2020-2070 (SNNGNNGNNNNNNNNNNIKANQQQQQQSSYQQSQTQQQQQHITSTSTSTTN) the composition is skewed to low complexity. Residues 2089–2102 (PSRPPPPPPPPPQL) are compositionally biased toward pro residues. Positions 2115-2387 (LEFGQTIGKG…FKQIIVHLKE (273 aa)) constitute a Protein kinase domain. Residues 2121-2129 (IGKGFFGEV) and Lys2142 each bind ATP. Asp2243 acts as the Proton acceptor in catalysis.

It belongs to the protein kinase superfamily. TKL Tyr protein kinase family. In terms of processing, tyrosine kinase domain is capable of autophosphorylation, in vitro; however it is also autophosphorylated on serine and threonine residues.

The catalysed reaction is L-tyrosyl-[protein] + ATP = O-phospho-L-tyrosyl-[protein] + ADP + H(+). In terms of biological role, essential for spore differentiation. This chain is Dual specificity protein kinase splA (splA), found in Dictyostelium discoideum (Social amoeba).